A 96-amino-acid polypeptide reads, in one-letter code: Co-chaperonin GroES (96 aa).

This sequence belongs to the GroES chaperonin family. In terms of assembly, heptamer of 7 subunits arranged in a ring. Interacts with the chaperonin GroEL.

The protein localises to the cytoplasm. Functionally, together with the chaperonin GroEL, plays an essential role in assisting protein folding. The GroEL-GroES system forms a nano-cage that allows encapsulation of the non-native substrate proteins and provides a physical environment optimized to promote and accelerate protein folding. GroES binds to the apical surface of the GroEL ring, thereby capping the opening of the GroEL channel. The polypeptide is Co-chaperonin GroES (Legionella micdadei (Tatlockia micdadei)).